Here is a 383-residue protein sequence, read N- to C-terminus: ATP phosphoribosyltransferase regulatory subunit (383 aa).

This sequence belongs to the class-II aminoacyl-tRNA synthetase family. HisZ subfamily. In terms of assembly, heteromultimer composed of HisG and HisZ subunits.

Its subcellular location is the cytoplasm. The protein operates within amino-acid biosynthesis; L-histidine biosynthesis; L-histidine from 5-phospho-alpha-D-ribose 1-diphosphate: step 1/9. Its function is as follows. Required for the first step of histidine biosynthesis. May allow the feedback regulation of ATP phosphoribosyltransferase activity by histidine. This is ATP phosphoribosyltransferase regulatory subunit from Paraburkholderia phytofirmans (strain DSM 17436 / LMG 22146 / PsJN) (Burkholderia phytofirmans).